The sequence spans 246 residues: Orotidine 5'-phosphate decarboxylase (246 aa).

Residues D22, K44, 71 to 80, T130, R191, Q201, G221, and R222 contribute to the substrate site; that span reads DLKYHDIPHT. K73 functions as the Proton donor in the catalytic mechanism.

The protein belongs to the OMP decarboxylase family. Type 1 subfamily. Homodimer.

The catalysed reaction is orotidine 5'-phosphate + H(+) = UMP + CO2. It participates in pyrimidine metabolism; UMP biosynthesis via de novo pathway; UMP from orotate: step 2/2. Functionally, catalyzes the decarboxylation of orotidine 5'-monophosphate (OMP) to uridine 5'-monophosphate (UMP). In Neisseria meningitidis serogroup A / serotype 4A (strain DSM 15465 / Z2491), this protein is Orotidine 5'-phosphate decarboxylase.